An 88-amino-acid chain; its full sequence is Prolevitide (88 aa).

Positions 1–20 (MYKGIFLCVLFAVICANSLA) are cleaved as a signal peptide. Position 74 is a pyrrolidone carboxylic acid (Q74). A Glutamine amide modification is found at Q87.

It belongs to the gastrin/cholecystokinin family. As to expression, expressed by the skin glands.

It localises to the secreted. This is Prolevitide from Xenopus laevis (African clawed frog).